Reading from the N-terminus, the 424-residue chain is 3-phosphoshikimate 1-carboxyvinyltransferase (424 aa).

Lys-21, Ser-22, and Arg-26 together coordinate 3-phosphoshikimate. Lys-21 lines the phosphoenolpyruvate pocket. Gly-91 and Arg-119 together coordinate phosphoenolpyruvate. 3-phosphoshikimate contacts are provided by Ser-164, Gln-166, Asp-310, and Lys-337. Gln-166 provides a ligand contact to phosphoenolpyruvate. The active-site Proton acceptor is the Asp-310. Residues Arg-341 and Arg-382 each coordinate phosphoenolpyruvate.

This sequence belongs to the EPSP synthase family. As to quaternary structure, monomer.

Its subcellular location is the cytoplasm. It catalyses the reaction 3-phosphoshikimate + phosphoenolpyruvate = 5-O-(1-carboxyvinyl)-3-phosphoshikimate + phosphate. It functions in the pathway metabolic intermediate biosynthesis; chorismate biosynthesis; chorismate from D-erythrose 4-phosphate and phosphoenolpyruvate: step 6/7. Catalyzes the transfer of the enolpyruvyl moiety of phosphoenolpyruvate (PEP) to the 5-hydroxyl of shikimate-3-phosphate (S3P) to produce enolpyruvyl shikimate-3-phosphate and inorganic phosphate. The chain is 3-phosphoshikimate 1-carboxyvinyltransferase from Campylobacter curvus (strain 525.92).